Consider the following 272-residue polypeptide: Putative phosphoenolpyruvate synthase regulatory protein (272 aa).

Residue 152 to 159 (GVSRCGKT) participates in ADP binding.

The protein belongs to the pyruvate, phosphate/water dikinase regulatory protein family. PSRP subfamily.

The catalysed reaction is [pyruvate, water dikinase] + ADP = [pyruvate, water dikinase]-phosphate + AMP + H(+). It catalyses the reaction [pyruvate, water dikinase]-phosphate + phosphate + H(+) = [pyruvate, water dikinase] + diphosphate. Its function is as follows. Bifunctional serine/threonine kinase and phosphorylase involved in the regulation of the phosphoenolpyruvate synthase (PEPS) by catalyzing its phosphorylation/dephosphorylation. The polypeptide is Putative phosphoenolpyruvate synthase regulatory protein (Pseudomonas fluorescens (strain ATCC BAA-477 / NRRL B-23932 / Pf-5)).